Here is a 325-residue protein sequence, read N- to C-terminus: Probable flavonol synthase 5 (325 aa).

Residues 1–21 (MEEERDHNASESSLPSLSKQL) are disordered. Residues 10–21 (SESSLPSLSKQL) show a composition bias toward polar residues. In terms of domain architecture, Fe2OG dioxygenase spans 180 to 280 (TAEYVLRVNF…RISWPVFVAP (101 aa)). 188-190 (NFY) contacts 2-oxoglutarate. Fe cation-binding residues include His205, Asp207, and His261. 271-273 (RIS) is a 2-oxoglutarate binding site.

It belongs to the iron/ascorbate-dependent oxidoreductase family. It depends on Fe(2+) as a cofactor. As to expression, expressed in young seedlings.

The catalysed reaction is a (2R,3R)-dihydroflavonol + 2-oxoglutarate + O2 = a flavonol + succinate + CO2 + H2O. It functions in the pathway secondary metabolite biosynthesis; flavonoid biosynthesis. The chain is Probable flavonol synthase 5 (FLS5) from Arabidopsis thaliana (Mouse-ear cress).